The sequence spans 192 residues: dTTP/UTP pyrophosphatase (192 aa).

The Proton acceptor role is filled by Asp-72.

It belongs to the Maf family. YhdE subfamily. The cofactor is a divalent metal cation.

It localises to the cytoplasm. The enzyme catalyses dTTP + H2O = dTMP + diphosphate + H(+). It catalyses the reaction UTP + H2O = UMP + diphosphate + H(+). Functionally, nucleoside triphosphate pyrophosphatase that hydrolyzes dTTP and UTP. May have a dual role in cell division arrest and in preventing the incorporation of modified nucleotides into cellular nucleic acids. The protein is dTTP/UTP pyrophosphatase of Hydrogenovibrio crunogenus (strain DSM 25203 / XCL-2) (Thiomicrospira crunogena).